Here is a 394-residue protein sequence, read N- to C-terminus: GDNF family receptor alpha-like (394 aa).

A signal peptide spans 1–18 (MIVFIFLAMGLSLENEYT). At 19 to 351 (SQTNNCTYLR…TGFHSPFNGE (333 aa)) the chain is on the extracellular side. Residues N23, N50, N62, N67, N103, and N116 are each glycosylated (N-linked (GlcNAc...) asparagine). 11 cysteine pairs are disulfide-bonded: C131–C189, C138–C144, C155–C167, C162–C210, C191–C198, C220–C291, C227–C233, C244–C275, C252–C258, C269–C316, and C293–C304. The required for interaction with GDF15 stretch occupies residues 149–228 (ASYLKACSAN…TCLSVIRSCQ (80 aa)). Residues 352–371 (VIYAAMCMTVTCGILLLVMV) traverse the membrane as a helical segment. Over 372–394 (KLRTSRISSKARDPSSIQIPGEL) the chain is Cytoplasmic.

The protein belongs to the GDNFR family. Interacts (via the extracellular domain) with GDF15 and RET; receptor of GDF15, mediates cellular signaling through interaction with RET after GDF15-binding. Interaction with RET requires previous GDF15-binding. Cleaved and inactivated by MMP14, inhibiting the GDF15-GFRAL aversive response. Expressed in the brainstem, restricted to cells in the area postrema and the immediately adjacent region of the nucleus tractus solitarius (at protein level). Detected at low levels in testis and adipose tissue.

It localises to the cell membrane. With respect to regulation, specifically inhibited by 3P10 monoclonal antibody. Strongly activated by LY3463251, a long-acting and stable agonist composed of GDF15 conjugated monomeric human IgG4 Fc. Its function is as follows. Brainstem-restricted receptor for GDF15 hormone, which triggers an aversive response, characterized by nausea, vomiting, and/or loss of appetite in response to various stresses. The aversive response is both required to reduce continuing exposure to those stresses at the time of exposure and to promote avoidance behavior in the future. The GDF15-GFRAL aversive response is triggered by stresses, such as anticancer drugs (camptothecin or cisplatin), cancers or drugs such as metformin. Upon interaction with its ligand, GDF15, mediates the GDF15-induced autophosphorylation and activation of the RET tyrosine kinase receptor, leading to activation of MAPK- and AKT- signaling pathways. Ligand-binding activates GFRAL-expressing neurons localized in the area postrema and nucleus tractus solitarius of the brainstem. The GDF15-GFRAL signal induces expression of genes involved in metabolism, such as lipid metabolism in adipose tissues. This Homo sapiens (Human) protein is GDNF family receptor alpha-like.